The sequence spans 84 residues: Mu-Sparatoxin-Hp1 (84 aa).

The signal sequence occupies residues 1 to 20 (MKIAIVMTLLLVAFSTASFA). The propeptide occupies 21-35 (IEPIERAALDLVMAR). Disulfide bonds link Cys-54–Cys-68, Cys-61–Cys-73, and Cys-67–Cys-78. Leu-82 is modified (leucine amide).

In terms of tissue distribution, expressed by the venom gland.

The protein resides in the secreted. Its function is as follows. Weakly nhibits voltage-gated sodium channels Nav1.7/SCN9A. High concentration of the toxin (3 uM) inhibits Nav1.7/SCN9A currents by 79%. This Heteropoda pingtungensis (Pingtung huntsman spider) protein is Mu-Sparatoxin-Hp1.